The sequence spans 263 residues: MRIAIIGGTGVYDPKFLENPEEIKVSTPYGEVKLLKGIYQGEEVGFLARHGAGHTVPPHRINYKANMWALKSLGVERILSTTAVGSLKLNLVPGDLVILDQFIDFTKNRDHTFYNGDDGKVIHIDFTNPYCPELRNILYETSKEIGIKAHPFGTYVCTEGPRFETPAEIKMYSFFGDVVGMTNVPEVILARELEICYASVSLVTNYAAGISPNPLTHSEVLEVMTQNIEKVRKLFAAVIPKIPKERNCICKNALKEYREKGLL.

Phosphate contacts are provided by residues threonine 9, 49-50, and 82-83; these read RH and TA. Methionine 181 contacts substrate. Position 182 (threonine 182) interacts with phosphate. 205–207 contributes to the substrate binding site; that stretch reads NYA.

The protein belongs to the PNP/MTAP phosphorylase family. MTAP subfamily. In terms of assembly, homohexamer. Dimer of a homotrimer.

The catalysed reaction is a purine D-ribonucleoside + phosphate = a purine nucleobase + alpha-D-ribose 1-phosphate. It participates in purine metabolism; purine nucleoside salvage. Functionally, purine nucleoside phosphorylase which is highly specific for 6-oxopurine nucleosides. Cleaves guanosine or inosine to respective bases and sugar-1-phosphate molecules. Involved in purine salvage. This Dictyoglomus turgidum (strain DSM 6724 / Z-1310) protein is Probable 6-oxopurine nucleoside phosphorylase.